The chain runs to 265 residues: Phosphonates import ATP-binding protein PhnC 1 (265 aa).

The ABC transporter domain occupies 3–247; that stretch reads LRLSGIELRH…HLDTLYANEQ (245 aa). 36–43 is an ATP binding site; that stretch reads GPSGAGKT. Positions 245–265 are disordered; that stretch reads NEQLSPQPAPDVSETPWTPRC.

Belongs to the ABC transporter superfamily. Phosphonates importer (TC 3.A.1.9.1) family. In terms of assembly, the complex is composed of two ATP-binding proteins (PhnC), two transmembrane proteins (PhnE) and a solute-binding protein (PhnD).

The protein localises to the cell inner membrane. The enzyme catalyses phosphonate(out) + ATP + H2O = phosphonate(in) + ADP + phosphate + H(+). Part of the ABC transporter complex PhnCDE involved in phosphonates import. Responsible for energy coupling to the transport system. This Pseudomonas savastanoi pv. phaseolicola (strain 1448A / Race 6) (Pseudomonas syringae pv. phaseolicola (strain 1448A / Race 6)) protein is Phosphonates import ATP-binding protein PhnC 1.